The following is a 279-amino-acid chain: Energy-coupling factor transporter ATP-binding protein EcfA1 (279 aa).

In terms of domain architecture, ABC transporter spans 6–240; that stretch reads ISVDHLTYQY…GTQLVEMGLD (235 aa). 40 to 47 contacts ATP; sequence GHNGSGKS.

It belongs to the ABC transporter superfamily. Energy-coupling factor EcfA family. Forms a stable energy-coupling factor (ECF) transporter complex composed of 2 membrane-embedded substrate-binding proteins (S component), 2 ATP-binding proteins (A component) and 2 transmembrane proteins (T component).

The protein localises to the cell membrane. ATP-binding (A) component of a common energy-coupling factor (ECF) ABC-transporter complex. Unlike classic ABC transporters this ECF transporter provides the energy necessary to transport a number of different substrates. In Levilactobacillus brevis (strain ATCC 367 / BCRC 12310 / CIP 105137 / JCM 1170 / LMG 11437 / NCIMB 947 / NCTC 947) (Lactobacillus brevis), this protein is Energy-coupling factor transporter ATP-binding protein EcfA1.